The chain runs to 164 residues: S-ribosylhomocysteine lyase (164 aa).

Residues His-54, His-58, and Cys-128 each contribute to the Fe cation site.

This sequence belongs to the LuxS family. In terms of assembly, homodimer. Fe cation serves as cofactor.

It carries out the reaction S-(5-deoxy-D-ribos-5-yl)-L-homocysteine = (S)-4,5-dihydroxypentane-2,3-dione + L-homocysteine. Functionally, involved in the synthesis of autoinducer 2 (AI-2) which is secreted by bacteria and is used to communicate both the cell density and the metabolic potential of the environment. The regulation of gene expression in response to changes in cell density is called quorum sensing. Catalyzes the transformation of S-ribosylhomocysteine (RHC) to homocysteine (HC) and 4,5-dihydroxy-2,3-pentadione (DPD). This chain is S-ribosylhomocysteine lyase, found in Campylobacter jejuni subsp. doylei (strain ATCC BAA-1458 / RM4099 / 269.97).